The following is a 1006-amino-acid chain: MAEQESLEFGKADFVLMDTVSMPEFMANLRLRFEKGRIYTFIGEVVVSVNPYKVLNIYGRDTVEQYKGRELYERPPHLFAIADAAYKAMKRRSKDTCIMISGESGAGKTEASKYIMQYIAAITNPSQRAEIERVKNMLLKSNCVLEAFGNAKTNRNDNSSRFGKYMDINFDFKGDPIGGHINNYLLEKSRVIVQQPGERSFHSFYQLLQGGSEQMLHSLHLQKSLSSYNYIRVGAQLKSSINDAAEFKVVADAMKVIGFKPEEIQTVYKILAVILHLGNLKFIVDGDTPLIENGKVVSVIAELLSTKADMVEKALLYRTVATGRDIIDKQHTEQEASYGRDAFAKAIYERLFCWIVTRINDIIEVKNYDTTIHGKNTVIGVLDIYGFEIFDNNSFEQFCINYCNEKLQQLFIQLVLKQEQEEYQREGIPWKHIDYFNNQIIVDLVEQQHKGIIAILDDACMNVGKVTDGMFLEALNSKLGKHGHFSSRKTCASDKILEFDRDFRIRHYAGDVVYSAIGFIDKNKDTLFQDFKRLMYNSSNPVLKNMWPEGKLSITEVTKRPLTAATLFKNSMIALVDNLASKEPYYVRCIKPNDKKSPQIFDDERCRHQVEYLGLLENVRVRRAGFAFRQTYEKFLHRYKMISEFTWPNHDLPSDKEAVKKLIERCGFQDDVAYGKSKIFIRTPRTLFTLEELRAQMLVRVVLFLQKVWRGTLARMRYKRTKAALTIIRYYRRYKVKSYIHEVARRFHGVKNMRDYGKHVKWPTPPKVLRRFEEALQSIFNRWRASQLIKTIPASDLPQVRAKVAAMEMLKGQRADLGLQRAWEGNYLASKPDTPQTSGTFVPVANELKRKDKYMNVLFSCHVRKVNRFSKVEDRAIFVTDRHLYKMDPTKQYKVMKTIPLYNLTGLSVSNGKDQLVVFHTKDNKDLIVCLFSKQPTHESRIGELVGVLVNHFKSEKRHLQVNVTNPVQCSLHGKKCTVSVETRLNQPQPDFTKNRSGFILSVPGN.

Residue alanine 2 is modified to N-acetylalanine. The 687-residue stretch at 9–695 (FGKADFVLMD…TLFTLEELRA (687 aa)) folds into the Myosin motor domain. ATP is bound at residue 102 to 109 (GESGAGKT). Position 200 is a phosphoserine (serine 200). Tyrosine 536 bears the Phosphotyrosine mark. Positions 572-594 (MIALVDNLASKEPYYVRCIKPND) are actin-binding. IQ domains follow at residues 699–719 (VRVVLFLQKVWRGTLARMRYK) and 721–741 (TKAALTIIRYYRRYKVKSYIH). The region spanning 812 to 1005 (GQRADLGLQR…RSGFILSVPG (194 aa)) is the TH1 domain.

Belongs to the TRAFAC class myosin-kinesin ATPase superfamily. Myosin family. In terms of assembly, interacts (via the two IQ motifs) with calmodulin. Binds an additional calmodulin chain via a third, C-terminal region. Interacts with F-actin. In terms of tissue distribution, detected in enterocytes at the intestinal brush border membrane. Detected at the tip of intestinal microvilli (at protein level).

The protein resides in the cytoplasm. It localises to the perikaryon. The protein localises to the cell projection. It is found in the dendrite. Its subcellular location is the early endosome. The protein resides in the cell cortex. It localises to the basolateral cell membrane. Its function is as follows. Unconventional myosin that functions as actin-based motor protein with ATPase activity. Plays a role in endosomal protein trafficking, and especially in the transfer of cargo proteins from early to recycling endosomes. Required for normal planar cell polarity in ciliated tracheal cells, for normal rotational polarity of cilia, and for coordinated, unidirectional ciliary movement in the trachea. Required for normal, polarized cilia organization in brain ependymal epithelial cells. This chain is Unconventional myosin-Id, found in Mus musculus (Mouse).